An 861-amino-acid chain; its full sequence is Probable beta-glucosidase A (861 aa).

An N-terminal signal peptide occupies residues 1–19; sequence MKLSILEAAALTAASVVSA. N-linked (GlcNAc...) asparagine glycosylation is found at asparagine 62, asparagine 212, and asparagine 253. Residue aspartate 281 is part of the active site. N-linked (GlcNAc...) asparagine glycans are attached at residues asparagine 316, asparagine 323, asparagine 355, asparagine 524, asparagine 543, asparagine 565, asparagine 669, and asparagine 713. The interval 735-754 is disordered; the sequence is PEGATDGSPQPRLPASGGPG.

This sequence belongs to the glycosyl hydrolase 3 family.

It is found in the secreted. The enzyme catalyses Hydrolysis of terminal, non-reducing beta-D-glucosyl residues with release of beta-D-glucose.. It functions in the pathway glycan metabolism; cellulose degradation. Beta-glucosidases are one of a number of cellulolytic enzymes involved in the degradation of cellulosic biomass. Catalyzes the last step releasing glucose from the inhibitory cellobiose. This Aspergillus terreus (strain NIH 2624 / FGSC A1156) protein is Probable beta-glucosidase A (bglA).